The primary structure comprises 269 residues: Imidazoleglycerol-phosphate dehydratase 1, chloroplastic (269 aa).

Disordered stretches follow at residues 1–31 (MTTA…GSGG) and 54–73 (SGVG…VSSR). Residues 1–52 (MTTAPFVSPSLPRLHSARASPFPKPSVGSGGGVAFPARTYGSSLRLRSAVMS) constitute a chloroplast transit peptide. Substrate contacts are provided by residues glutamate 83, 109 to 117 (HMLDQLASH), 135 to 139 (HHSNE), arginine 161, and arginine 183. Residues histidine 109, histidine 135, histidine 136, and glutamate 139 each contribute to the Mn(2+) site. Mn(2+) contacts are provided by histidine 207, histidine 231, histidine 232, and glutamate 235. Residues 231-239 (HHIIEATFK) and 261-263 (SSK) each bind substrate.

It belongs to the imidazoleglycerol-phosphate dehydratase family. Mn(2+) serves as cofactor.

The protein localises to the plastid. It is found in the chloroplast. It catalyses the reaction D-erythro-1-(imidazol-4-yl)glycerol 3-phosphate = 3-(imidazol-4-yl)-2-oxopropyl phosphate + H2O. Its pathway is amino-acid biosynthesis; L-histidine biosynthesis; L-histidine from 5-phospho-alpha-D-ribose 1-diphosphate: step 6/9. The protein is Imidazoleglycerol-phosphate dehydratase 1, chloroplastic of Triticum aestivum (Wheat).